We begin with the raw amino-acid sequence, 292 residues long: ATP synthase subunit a (292 aa).

The next 7 membrane-spanning stretches (helical) occupy residues 39–59 (QILG…FYKL), 73–93 (FLLL…DLLG), 102–122 (YFLM…LGGI), 128–148 (SLTF…VMGI), 172–192 (TFIP…SISL), 196–216 (GNIL…IFIF), and 231–251 (VFAG…AGVL).

Belongs to the ATPase A chain family. In terms of assembly, F-type ATPases have 2 components, CF(1) - the catalytic core - and CF(0) - the membrane proton channel. CF(1) has five subunits: alpha(3), beta(3), gamma(1), delta(1), epsilon(1). CF(0) has three main subunits: a(1), b(2) and c(9-12). The alpha and beta chains form an alternating ring which encloses part of the gamma chain. CF(1) is attached to CF(0) by a central stalk formed by the gamma and epsilon chains, while a peripheral stalk is formed by the delta and b chains.

It localises to the cell membrane. Key component of the proton channel; it plays a direct role in the translocation of protons across the membrane. The chain is ATP synthase subunit a from Mycoplasma genitalium (strain ATCC 33530 / DSM 19775 / NCTC 10195 / G37) (Mycoplasmoides genitalium).